Here is a 733-residue protein sequence, read N- to C-terminus: uncharacterized protein (733 aa).

The helical transmembrane segment at 174-194 (WAVMILASLRPELFGPIIIAG) threads the bilayer.

It localises to the membrane. This is an uncharacterized protein from Rhizobium meliloti (Ensifer meliloti).